We begin with the raw amino-acid sequence, 394 residues long: Flavohemoprotein (394 aa).

The 136-residue stretch at 1 to 136 folds into the Globin domain; the sequence is MLSENTINIV…LANVFIQREE (136 aa). His-85 provides a ligand contact to heme b. Residues Tyr-95 and Glu-135 each act as charge relay system in the active site. The tract at residues 147 to 394 is reductase; the sequence is GGWRGLREFE…YECFGPHKVV (248 aa). In terms of domain architecture, FAD-binding FR-type spans 150-255; sequence RGLREFELVE…AAPAGDFFLD (106 aa). Residues Tyr-188 and 204 to 207 contribute to the FAD site; that span reads RQYS. 268–273 lines the NADP(+) pocket; it reads GVGLTP. 387–390 lines the FAD pocket; sequence CFGP.

Belongs to the globin family. Two-domain flavohemoproteins subfamily. It in the C-terminal section; belongs to the flavoprotein pyridine nucleotide cytochrome reductase family. The cofactor is heme b. It depends on FAD as a cofactor.

The catalysed reaction is 2 nitric oxide + NADPH + 2 O2 = 2 nitrate + NADP(+) + H(+). It carries out the reaction 2 nitric oxide + NADH + 2 O2 = 2 nitrate + NAD(+) + H(+). In terms of biological role, is involved in NO detoxification in an aerobic process, termed nitric oxide dioxygenase (NOD) reaction that utilizes O(2) and NAD(P)H to convert NO to nitrate, which protects the bacterium from various noxious nitrogen compounds. Therefore, plays a central role in the inducible response to nitrosative stress. The protein is Flavohemoprotein of Vibrio vulnificus (strain YJ016).